The following is a 218-amino-acid chain: Oxygen regulatory protein NreC (218 aa).

One can recognise a Response regulatory domain in the interval 2–119; sequence KIVIADDHAV…QLILAVRTVY (118 aa). Asp-53 is subject to 4-aspartylphosphate. Residues 149–214 form the HTH luxR-type domain; sequence SSDPFKILSK…ELVEYALKKK (66 aa). The segment at residues 173–192 is a DNA-binding region (H-T-H motif); it reads NKDIAEKLFVSVKTVEAHKT.

Phosphorylated by NreB.

The protein resides in the cytoplasm. Member of the two-component regulatory system NreB/NreC involved in the control of dissimilatory nitrate/nitrite reduction in response to oxygen. Phosphorylated NreC binds to a GC-rich palindromic sequence at the promoters of the nitrate (narGHJI) and nitrite (nir) reductase operons, as well as the putative nitrate transporter gene narT, and activates their expression. The protein is Oxygen regulatory protein NreC (nreC) of Staphylococcus epidermidis (strain ATCC 12228 / FDA PCI 1200).